The chain runs to 98 residues: Large ribosomal subunit protein bL27 (98 aa).

The segment at 1–22 (MAHKKGTGSTRNGRDSNAQRLG) is disordered. Residues 7 to 19 (TGSTRNGRDSNAQ) are compositionally biased toward polar residues.

This sequence belongs to the bacterial ribosomal protein bL27 family.

This Nostoc punctiforme (strain ATCC 29133 / PCC 73102) protein is Large ribosomal subunit protein bL27.